A 345-amino-acid chain; its full sequence is Myb/SANT-like DNA-binding domain-containing protein 4 (345 aa).

The 74-residue stretch at 4–77 (LKRKRKSNFS…EVKRRYLDWR (74 aa)) folds into the Myb-like domain. K9 participates in a covalent cross-link: Glycyl lysine isopeptide (Lys-Gly) (interchain with G-Cter in SUMO2). Position 106 is a phosphoserine (S106). Residues K114 and K142 each participate in a glycyl lysine isopeptide (Lys-Gly) (interchain with G-Cter in SUMO2) cross-link. The disordered stretch occupies residues 143–175 (VEEEERDPQSPEFEIEEEEEMLSSVIPDSRREN). T188 carries the post-translational modification Phosphothreonine. Residues 203 to 345 (LLVNIEKQKL…LRIQKEGHLQ (143 aa)) adopt a coiled-coil conformation. Residues K237, K254, and K273 each participate in a glycyl lysine isopeptide (Lys-Gly) (interchain with G-Cter in SUMO2) cross-link.

The sequence is that of Myb/SANT-like DNA-binding domain-containing protein 4 (MSANTD4) from Homo sapiens (Human).